Here is a 360-residue protein sequence, read N- to C-terminus: Peptide chain release factor 1 (360 aa).

An N5-methylglutamine modification is found at Gln-235.

Belongs to the prokaryotic/mitochondrial release factor family. Methylated by PrmC. Methylation increases the termination efficiency of RF1.

It localises to the cytoplasm. In terms of biological role, peptide chain release factor 1 directs the termination of translation in response to the peptide chain termination codons UAG and UAA. This is Peptide chain release factor 1 from Burkholderia multivorans (strain ATCC 17616 / 249).